We begin with the raw amino-acid sequence, 111 residues long: 2Fe-2S ferredoxin (111 aa).

The 104-residue stretch at 1-104 folds into the 2Fe-2S ferredoxin-type domain; the sequence is MPKVLFLPHK…DIEVEIPLYN (104 aa). [2Fe-2S] cluster is bound by residues cysteine 42, cysteine 48, cysteine 51, and cysteine 87.

It belongs to the adrenodoxin/putidaredoxin family. The cofactor is [2Fe-2S] cluster.

Functionally, ferredoxin are iron-sulfur proteins that transfer electrons in a wide variety of metabolic reactions. The protein is 2Fe-2S ferredoxin (fdx) of Buchnera aphidicola subsp. Acyrthosiphon pisum (strain APS) (Acyrthosiphon pisum symbiotic bacterium).